Consider the following 167-residue polypeptide: uncharacterized protein (167 aa).

Its subcellular location is the plastid. The protein localises to the chloroplast. This is an uncharacterized protein from Mesostigma viride (Green alga).